Reading from the N-terminus, the 328-residue chain is Tetraacyldisaccharide 4'-kinase (328 aa).

52-59 (NAGGTGKT) provides a ligand contact to ATP.

It belongs to the LpxK family.

The catalysed reaction is a lipid A disaccharide + ATP = a lipid IVA + ADP + H(+). It participates in glycolipid biosynthesis; lipid IV(A) biosynthesis; lipid IV(A) from (3R)-3-hydroxytetradecanoyl-[acyl-carrier-protein] and UDP-N-acetyl-alpha-D-glucosamine: step 6/6. In terms of biological role, transfers the gamma-phosphate of ATP to the 4'-position of a tetraacyldisaccharide 1-phosphate intermediate (termed DS-1-P) to form tetraacyldisaccharide 1,4'-bis-phosphate (lipid IVA). The protein is Tetraacyldisaccharide 4'-kinase of Jannaschia sp. (strain CCS1).